The following is a 145-amino-acid chain: Superoxide dismutase [Cu-Zn] (145 aa).

The Cu cation site is built by His37, His39, and His54. Cys48 and Cys137 are joined by a disulfide. The Zn(2+) site is built by His54, His62, His71, and Asp74. His111 contacts Cu cation.

This sequence belongs to the Cu-Zn superoxide dismutase family. Homodimer. Cu cation is required as a cofactor. Requires Zn(2+) as cofactor.

Its subcellular location is the cytoplasm. The catalysed reaction is 2 superoxide + 2 H(+) = H2O2 + O2. Its function is as follows. Destroys radicals which are normally produced within the cells and which are toxic to biological systems. The chain is Superoxide dismutase [Cu-Zn] from Drosophila busckii (Fruit fly).